Consider the following 176-residue polypeptide: ATP-dependent protease subunit HslV (176 aa).

The active site involves threonine 5. 3 residues coordinate Na(+): serine 161, cysteine 164, and threonine 167.

Belongs to the peptidase T1B family. HslV subfamily. In terms of assembly, a double ring-shaped homohexamer of HslV is capped on each side by a ring-shaped HslU homohexamer. The assembly of the HslU/HslV complex is dependent on binding of ATP.

It localises to the cytoplasm. It carries out the reaction ATP-dependent cleavage of peptide bonds with broad specificity.. Allosterically activated by HslU binding. Functionally, protease subunit of a proteasome-like degradation complex believed to be a general protein degrading machinery. The sequence is that of ATP-dependent protease subunit HslV from Desulfitobacterium hafniense (strain Y51).